Here is a 424-residue protein sequence, read N- to C-terminus: uncharacterized protein (424 aa).

This is an uncharacterized protein from Orgyia pseudotsugata (Douglas-fir tussock moth).